The following is an 85-amino-acid chain: Large ribosomal subunit protein bL27 (85 aa).

Residues 1 to 24 form a disordered region; sequence MAHKKAGGSSRNGRDSNSKRLGVK.

This sequence belongs to the bacterial ribosomal protein bL27 family.

This is Large ribosomal subunit protein bL27 from Nitrosospira multiformis (strain ATCC 25196 / NCIMB 11849 / C 71).